The following is a 290-amino-acid chain: Eukaryotic translation initiation factor 3 subunit G (290 aa).

Positions 1–34 are disordered; that stretch reads MSRLGNRAADWADDEEFDDPSALPAQQVTTNKDG. In terms of domain architecture, RRM spans 210-288; sequence ATLRVTNVSE…LILRVEFAKR (79 aa).

It belongs to the eIF-3 subunit G family. Component of the eukaryotic translation initiation factor 3 (eIF-3) complex.

Its subcellular location is the cytoplasm. In terms of biological role, RNA-binding component of the eukaryotic translation initiation factor 3 (eIF-3) complex, which is involved in protein synthesis of a specialized repertoire of mRNAs and, together with other initiation factors, stimulates binding of mRNA and methionyl-tRNAi to the 40S ribosome. The eIF-3 complex specifically targets and initiates translation of a subset of mRNAs involved in cell proliferation. This subunit can bind 18S rRNA. The protein is Eukaryotic translation initiation factor 3 subunit G of Neosartorya fischeri (strain ATCC 1020 / DSM 3700 / CBS 544.65 / FGSC A1164 / JCM 1740 / NRRL 181 / WB 181) (Aspergillus fischerianus).